The sequence spans 103 residues: Flagellar hook-basal body complex protein FliE (103 aa).

This sequence belongs to the FliE family.

The protein resides in the bacterial flagellum basal body. This is Flagellar hook-basal body complex protein FliE from Photorhabdus laumondii subsp. laumondii (strain DSM 15139 / CIP 105565 / TT01) (Photorhabdus luminescens subsp. laumondii).